The sequence spans 77 residues: Acyl carrier protein (77 aa).

Residues 1 to 76 enclose the Carrier domain; it reads MENFDKVKDI…DAVKFINSLE (76 aa). S36 bears the O-(pantetheine 4'-phosphoryl)serine mark.

This sequence belongs to the acyl carrier protein (ACP) family. 4'-phosphopantetheine is transferred from CoA to a specific serine of apo-ACP by AcpS. This modification is essential for activity because fatty acids are bound in thioester linkage to the sulfhydryl of the prosthetic group.

The protein localises to the cytoplasm. Its pathway is lipid metabolism; fatty acid biosynthesis. Carrier of the growing fatty acid chain in fatty acid biosynthesis. The protein is Acyl carrier protein of Staphylococcus aureus (strain Mu3 / ATCC 700698).